The sequence spans 378 residues: Homoserine O-acetyltransferase (378 aa).

An AB hydrolase-1 domain is found at 52-337 (NAILICHALT…YSQHGHDTFL (286 aa)). S148 serves as the catalytic Nucleophile. R217 serves as a coordination point for substrate. Catalysis depends on residues D304 and H333. Residue D334 participates in substrate binding.

The protein belongs to the AB hydrolase superfamily. MetX family. Homodimer.

It is found in the cytoplasm. It catalyses the reaction L-homoserine + acetyl-CoA = O-acetyl-L-homoserine + CoA. It participates in amino-acid biosynthesis; L-methionine biosynthesis via de novo pathway; O-acetyl-L-homoserine from L-homoserine: step 1/1. In terms of biological role, transfers an acetyl group from acetyl-CoA to L-homoserine, forming acetyl-L-homoserine. The polypeptide is Homoserine O-acetyltransferase (Chloroherpeton thalassium (strain ATCC 35110 / GB-78)).